Here is a 126-residue protein sequence, read N- to C-terminus: Small ribosomal subunit protein uS13 (126 aa).

The segment at 91–126 (RHRRGLPVRGQRTSTNARTRKGPRRAIAGKKKPGKK) is disordered. Positions 108-126 (RTRKGPRRAIAGKKKPGKK) are enriched in basic residues.

Belongs to the universal ribosomal protein uS13 family. In terms of assembly, part of the 30S ribosomal subunit. Forms a loose heterodimer with protein S19. Forms two bridges to the 50S subunit in the 70S ribosome.

Its function is as follows. Located at the top of the head of the 30S subunit, it contacts several helices of the 16S rRNA. In the 70S ribosome it contacts the 23S rRNA (bridge B1a) and protein L5 of the 50S subunit (bridge B1b), connecting the 2 subunits; these bridges are implicated in subunit movement. Contacts the tRNAs in the A and P-sites. This Streptomyces coelicolor (strain ATCC BAA-471 / A3(2) / M145) protein is Small ribosomal subunit protein uS13.